We begin with the raw amino-acid sequence, 208 residues long: Ribosomal RNA large subunit methyltransferase E (208 aa).

The S-adenosyl-L-methionine site is built by Gly-62, Trp-64, Asp-82, Asp-98, and Asp-123. Lys-163 functions as the Proton acceptor in the catalytic mechanism.

Belongs to the class I-like SAM-binding methyltransferase superfamily. RNA methyltransferase RlmE family.

It localises to the cytoplasm. The enzyme catalyses uridine(2552) in 23S rRNA + S-adenosyl-L-methionine = 2'-O-methyluridine(2552) in 23S rRNA + S-adenosyl-L-homocysteine + H(+). Specifically methylates the uridine in position 2552 of 23S rRNA at the 2'-O position of the ribose in the fully assembled 50S ribosomal subunit. In Glaesserella parasuis serovar 5 (strain SH0165) (Haemophilus parasuis), this protein is Ribosomal RNA large subunit methyltransferase E.